A 457-amino-acid chain; its full sequence is Protein OS-9 homolog (457 aa).

Residues 1-22 (MIFLPVTSVVFAISWIYSGVSA) form the signal peptide. Asn47 and Asn71 each carry an N-linked (GlcNAc...) asparagine glycan. In terms of domain architecture, MRH spans 104–222 (NPIEMNTVPI…RLFLPQLCEL (119 aa)). A mannooligosaccharide derivative is bound at residue Trp116. N-linked (GlcNAc...) asparagine glycosylation is found at Asn142 and Asn147. Disulfide bonds link Cys174-Cys208 and Cys189-Cys220. Asp175, Arg181, Glu204, and Tyr210 together coordinate a mannooligosaccharide derivative. N-linked (GlcNAc...) asparagine glycosylation is present at Asn389.

The protein belongs to the OS-9 family. Interacts with missfolded ER lumenal proteins.

The protein localises to the endoplasmic reticulum membrane. Lectin involved in the quality control of the secretory pathway. As a member of the endoplasmic reticulum-associated degradation lumenal (ERAD-L) surveillance system, targets misfolded endoplasmic reticulum lumenal glycoproteins for degradation. This chain is Protein OS-9 homolog (YOS9), found in Kluyveromyces lactis (strain ATCC 8585 / CBS 2359 / DSM 70799 / NBRC 1267 / NRRL Y-1140 / WM37) (Yeast).